A 95-amino-acid chain; its full sequence is uncharacterized protein (95 aa).

This is an uncharacterized protein from Autographa californica nuclear polyhedrosis virus (AcMNPV).